A 1282-amino-acid polypeptide reads, in one-letter code: Cytokine receptor (1282 aa).

A signal peptide spans 1-23 (MVAQEQLVLLLMLLAGCRGGANA). The Extracellular portion of the chain corresponds to 24 to 889 (ILDPGWVIPS…CTPDTHSVKA (866 aa)). Residues Asn44, Asn86, Asn87, and Asn114 are each glycosylated (N-linked (GlcNAc...) asparagine). A disulfide bridge links Cys47 with Cys106. Fibronectin type-III domains lie at 124 to 220 (PLLV…NHFE), 227 to 327 (PGQN…TAPA), 329 to 431 (PRRP…SNRD), 436 to 535 (EPRN…KKDD), 537 to 631 (AKME…TGEA), 635 to 735 (QPRE…TAIG), and 736 to 836 (VPSP…LMST). Cys132 and Cys142 are disulfide-bonded. N-linked (GlcNAc...) asparagine glycans are attached at residues Asn143 and Asn156. A disulfide bridge links Cys173 with Cys183. 9 N-linked (GlcNAc...) asparagine glycosylation sites follow: Asn184, Asn230, Asn235, Asn278, Asn298, Asn310, Asn376, Asn448, and Asn466. A disulfide bridge connects residues Cys472 and Cys482. Residues Asn568, Asn581, Asn626, Asn676, Asn703, Asn777, Asn790, and Asn862 are each glycosylated (N-linked (GlcNAc...) asparagine). The chain crosses the membrane as a helical span at residues 890 to 910 (MYQTIEVTVAILVLGVIFYLV). Residues 911 to 1282 (YKKYRKMSDI…NAMAHNRHVL (372 aa)) are Cytoplasmic-facing. Ser976 bears the Phosphoserine mark. Disordered regions lie at residues 989 to 1092 (TASS…HTFS) and 1238 to 1258 (TVGS…QHSR). 2 stretches are compositionally biased toward basic and acidic residues: residues 999 to 1009 (VDRDGYDDNHE) and 1033 to 1064 (NDRE…DREQ).

The protein belongs to the type I cytokine receptor family. As to quaternary structure, interacts with wdp; the interaction promotes internalization of dome and its subsequent lysosomal degradation; thereby reducing JAK/STAT signaling. Post-translationally, undergoes lysosomal degradation. As to expression, in stage 11 embryos, tracheal pits show highest expression, at stage 14 high expression is detected in the posterior spiracles, gut and head.

The protein localises to the apicolateral cell membrane. Functionally, critical for epithelial morphogenesis during oogenesis; border cell migration. Required in the germarium for the polarization of follicle cells during encapsulation of germline cells. Required for embryonic segmentation and trachea specification. Essential receptor molecule for upd and JAK/STAT signaling during oogenesis. This chain is Cytokine receptor (dome), found in Drosophila melanogaster (Fruit fly).